Reading from the N-terminus, the 129-residue chain is Protein Turandot B1 (129 aa).

The N-terminal stretch at 1–21 (MNSATSLMCFALLLISPLCMG) is a signal peptide.

Belongs to the Turandot family.

It is found in the secreted. A humoral factor that may play a role in stress tolerance. The polypeptide is Protein Turandot B1 (TotB1) (Drosophila erecta (Fruit fly)).